Reading from the N-terminus, the 301-residue chain is Putative S-adenosyl-L-methionine-dependent methyltransferase Mflv_5024 (301 aa).

Residues Asp129 and 158–159 (DL) each bind S-adenosyl-L-methionine.

The protein belongs to the UPF0677 family.

Its function is as follows. Exhibits S-adenosyl-L-methionine-dependent methyltransferase activity. This chain is Putative S-adenosyl-L-methionine-dependent methyltransferase Mflv_5024, found in Mycolicibacterium gilvum (strain PYR-GCK) (Mycobacterium gilvum (strain PYR-GCK)).